The chain runs to 1272 residues: Protein diaphanous homolog 1 (1272 aa).

The residue at position 1 (M1) is an N-acetylmethionine. Over residues 1–12 (MEPPGGSLGPGR) the composition is skewed to gly residues. The interval 1 to 84 (MEPPGGSLGP…YGDDPTAQSL (84 aa)) is disordered. S7, S22, and S36 each carry phosphoserine. A compositionally biased stretch (basic and acidic residues) spans 44–65 (LMADELERFTSMRIKKEKEKPN). Residues 67–84 (AHRNSSASYGDDPTAQSL) are compositionally biased toward polar residues. Positions 84–449 (LQDVSDEQVL…QIVLHKNGAD (366 aa)) constitute a GBD/FH3 domain. Positions 468–572 (MIDKTKVEKS…ASLSAAAITV (105 aa)) form a coiled coil. A disordered region spans residues 573–755 (PPSVPSRAPV…GMPPPPPFGF (183 aa)). 3 stretches are compositionally biased toward pro residues: residues 574–589 (PSVPSRAPVPPAPPLP), 596–622 (IPPPPAPGDSTTPPPPPPPPPPPPPLP), and 640–658 (SPPPPLSGDATIPPPPPLP). The region spanning 583 to 764 (PPAPPLPGDS…FGVPAAPVLP (182 aa)) is the FH1 domain. Positions 659-674 (EGVGIPSPSSLPGGTA) are enriched in low complexity. The segment covering 675-753 (IPPPPPLPGS…GMGMPPPPPF (79 aa)) has biased composition (pro residues). T768 is subject to Phosphothreonine. The FH2 domain occupies 769-1171 (PKKLYKPEVQ…MRRAKLAKEK (403 aa)). A coiled-coil region spans residues 1039–1196 (DELAHVEKAS…IDMNAEGDET (158 aa)). N6-acetyllysine occurs at positions 1057 and 1103. Position 1121 is a phosphotyrosine (Y1121). In terms of domain architecture, DAD spans 1194-1222 (DETGVMDSLLEALQSGAAFRRKRGPRQAN). A phosphoserine mark is found at S1251 and S1254.

It belongs to the formin homology family. Diaphanous subfamily. In terms of assembly, homodimer. Interacts with the GTP-bound form of RHOA. Interacts with RHOC, PFY1, MAPRE1 and BAIAP2. Interacts with APC; acts as a scaffold protein for MAPRE1 and APC to stabilize microtubules and promote cell migration. Interacts with SCAI. Interacts with DCAF7, via FH2 domain. Interacts with NCDN. Interacts with OSBPL10, OSBPL2, VIM, TUBB and DYN1. In terms of processing, phosphorylation at Thr-768 is stimulated by cAMP and regulates stability, complex formation and mitochondrial movement. In terms of tissue distribution, expressed in brain, heart, placenta, lung, kidney, pancreas, liver, skeletal muscle and cochlea. Expressed in platelets.

The protein localises to the cell membrane. It is found in the cell projection. Its subcellular location is the ruffle membrane. The protein resides in the cytoplasm. It localises to the cytoskeleton. The protein localises to the microtubule organizing center. It is found in the centrosome. Its subcellular location is the spindle. The protein resides in the nucleus. Its function is as follows. Actin nucleation and elongation factor required for the assembly of F-actin structures, such as actin cables and stress fibers. Binds to the barbed end of the actin filament and slows down actin polymerization and depolymerization. Required for cytokinesis, and transcriptional activation of the serum response factor. DFR proteins couple Rho and Src tyrosine kinase during signaling and the regulation of actin dynamics. Functions as a scaffold protein for MAPRE1 and APC to stabilize microtubules and promote cell migration. Has neurite outgrowth promoting activity. Acts in a Rho-dependent manner to recruit PFY1 to the membrane. In hear cells, it may play a role in the regulation of actin polymerization in hair cells. The MEMO1-RHOA-DIAPH1 signaling pathway plays an important role in ERBB2-dependent stabilization of microtubules at the cell cortex. It controls the localization of APC and CLASP2 to the cell membrane, via the regulation of GSK3B activity. In turn, membrane-bound APC allows the localization of the MACF1 to the cell membrane, which is required for microtubule capture and stabilization. Plays a role in the regulation of cell morphology and cytoskeletal organization. Required in the control of cell shape. Plays a role in brain development. Also acts as an actin nucleation and elongation factor in the nucleus by promoting nuclear actin polymerization inside the nucleus to drive serum-dependent SRF-MRTFA activity. The protein is Protein diaphanous homolog 1 (DIAPH1) of Homo sapiens (Human).